The chain runs to 455 residues: L-serine dehydratase (455 aa).

Belongs to the iron-sulfur dependent L-serine dehydratase family. It depends on [4Fe-4S] cluster as a cofactor.

The enzyme catalyses L-serine = pyruvate + NH4(+). It functions in the pathway carbohydrate biosynthesis; gluconeogenesis. The protein is L-serine dehydratase (sdaA) of Helicobacter pylori (strain J99 / ATCC 700824) (Campylobacter pylori J99).